The chain runs to 504 residues: Maturase K (504 aa).

Belongs to the intron maturase 2 family. MatK subfamily.

It is found in the plastid. Its subcellular location is the chloroplast. Usually encoded in the trnK tRNA gene intron. Probably assists in splicing its own and other chloroplast group II introns. The sequence is that of Maturase K from Carpinus betulus (European hornbeam).